The primary structure comprises 363 residues: Cyanuric acid amidohydrolase (363 aa).

The tract at residues 1–103 (MKTRVTRLTV…LVFEVDDSAP (103 aa)) is RU A. Residues arginine 51 and 82–83 (SG) contribute to the substrate site. The RU B stretch occupies residues 111–247 (GLAAGVAFTR…NEVLVLGNAP (137 aa)). The active site involves lysine 161. Residues arginine 193 and 230-231 (SA) contribute to the substrate site. Catalysis depends on serine 230, which acts as the Nucleophile. The segment at 253–363 (YRIGHAVMED…GGPLALIVRS (111 aa)) is RU C. Position 297 (glutamate 297) interacts with Mg(2+). Residues arginine 324 and 343–344 (SG) contribute to the substrate site. The Mg(2+) site is built by alanine 346, glutamine 349, glycine 350, proline 351, and glycine 354.

The protein belongs to the cyclic amide hydrolase (CyAH) family. Homotetramer.

The enzyme catalyses cyanurate + H2O = 1-carboxybiuret + H(+). The protein operates within xenobiotic degradation; atrazine degradation; biuret from cyanurate: step 1/1. Its activity is regulated as follows. Inhibited by barbituric acid. Its function is as follows. Responsible for the hydrolysis of cyanuric acid, an intermediate formed during catabolism of s-triazine based compounds in herbicides such as atrazine and polymers such as melamine. Catalyzes the hydrolytic opening of the s-triazine ring of cyanuric acid (2,4,6-trihydroxy-s-triazine) to yield carbon dioxide and carboxybiuret, which spontaneously decarboxylates to biuret. The sequence is that of Cyanuric acid amidohydrolase from Ectopseudomonas oleovorans (strain CECT 5344) (Pseudomonas pseudoalcaligenes).